A 635-amino-acid polypeptide reads, in one-letter code: Chaperone protein HtpG (635 aa).

The segment at 1-346 (MSQTTTNSAS…SADLPLNVSR (346 aa)) is a; substrate-binding. Positions 347-563 (EILQESRDVR…QNELSPHLLR (217 aa)) are b. The tract at residues 564-635 (MLKAAGQEAP…KRLNGLLLKA (72 aa)) is c.

Belongs to the heat shock protein 90 family. As to quaternary structure, homodimer.

The protein localises to the cytoplasm. Molecular chaperone. Has ATPase activity. This chain is Chaperone protein HtpG, found in Bordetella parapertussis (strain 12822 / ATCC BAA-587 / NCTC 13253).